We begin with the raw amino-acid sequence, 326 residues long: MAFQPGSRGGRGGARGGARGGARGGRGGFGGRGGSRGGRGGFDSRGGARGGFGGRGGSRGGPRGGPRGGARGGRGGARGGAKGGAKVVIEPHKHAGVFIARGKEDLLVTKNVAPGESVYGEKRISVEEPASEEGVPPTKVEYRVWNPFRSKLAAGIMGGLDELFIAPGKKVLYLGAASGTSVSHVADVVGPEGLVYAVEFSHRPGRELISMAKKRPNVIPIIEDARHPQKYRMLIGMVDAVFADVAQPDQARIIALNSHMFLKDQGGVVISIKANCIDSTVDAETVFAREVQKLREEKIKPLEQLTLEPYERDHCIVIGRYMRSGL.

Residues 1–84 (MAFQPGSRGG…GGARGGAKGG (84 aa)) form a disordered region. The span at 7-83 (SRGGRGGARG…RGGARGGAKG (77 aa)) shows a compositional bias: gly residues. An asymmetric dimethylarginine mark is found at Arg-8, Arg-11, Arg-15, Arg-19, Arg-23, Arg-26, Arg-32, Arg-36, Arg-39, Arg-45, Arg-49, Arg-55, Arg-59, Arg-63, Arg-67, Arg-71, Arg-74, and Arg-78. S-adenosyl-L-methionine contacts are provided by residues 180-181 (TS), 199-200 (EF), 224-225 (DA), and 244-247 (DVAQ).

It belongs to the methyltransferase superfamily. Fibrillarin family. Component of box C/D small nucleolar ribonucleoprotein (snoRNP) particles that contain SNU13, NOP1, SIK1/NOP56 and NOP58, plus a guide RNA. Post-translationally, by homology to other fibrillarins, some or all of the N-terminal domain arginines are modified to asymmetric dimethylarginine (DMA).

It is found in the nucleus. It localises to the nucleolus. The catalysed reaction is L-glutaminyl-[histone H2A] + S-adenosyl-L-methionine = N(5)-methyl-L-glutaminyl-[histone H2A] + S-adenosyl-L-homocysteine + H(+). S-adenosyl-L-methionine-dependent methyltransferase that has the ability to methylate both RNAs and proteins. Involved in pre-rRNA processing. Utilizes the methyl donor S-adenosyl-L-methionine to catalyze the site-specific 2'-hydroxyl methylation of ribose moieties in pre-ribosomal RNA. Site specificity is provided by a guide RNA that base pairs with the substrate. Methylation occurs at a characteristic distance from the sequence involved in base pairing with the guide RNA. Also acts as a protein methyltransferase by mediating methylation of 'Gln-105' of histone H2A (H2AQ105me), a modification that impairs binding of the FACT complex and is specifically present at 35S ribosomal DNA locus. The sequence is that of rRNA 2'-O-methyltransferase fibrillarin (NOP1) from Eremothecium gossypii (strain ATCC 10895 / CBS 109.51 / FGSC 9923 / NRRL Y-1056) (Yeast).